Here is a 316-residue protein sequence, read N- to C-terminus: Secreted effector protein SifB (316 aa).

The protein belongs to the Sif family.

It localises to the secreted. It is found in the host cytoplasm. In terms of biological role, effector proteins function to alter host cell physiology and promote bacterial survival in host tissues. In Salmonella typhimurium (strain LT2 / SGSC1412 / ATCC 700720), this protein is Secreted effector protein SifB (sifB).